Here is a 736-residue protein sequence, read N- to C-terminus: MFRFAQPANVLKGKAPSQIVPPHPKTNSFVHPSAHPLKFNPNSAMTVEVPTHQNGPASNNQYNGNHSRPHFKNQFSSRNSSFTNVMNYGKNHGNNNMSPDSPWYNEVVAFEDCVSQTLYMSQTPRRSNMRNNGNNNMNNGRRTEHPNTQANPLFWDSIGRAMGLYHDLINTPELNSDRVSKLVHLLHNGLRANRNQLTRMNKKPDYDSQSFHKEMTNYLCKSLREISEDVLNGKVELNEYGAMHLITAFKELLLFQEAVNIWKSAINGSNNYTSNIFLNPRVVGVILPILYENGVSYPEIQSLYEKSSSMINYFHPNLSVGMIRASLSASENQMALKLFQKLCEESTEMKYGYLIETHLSFIGECKDLNVAQAFFDKALNDEMPYKIDLQVSYVKSFLKNIWSQTGDFNHIYQIWYKSSLHYGRHVNHGISSSLNDTFFDIFFENYANDKVQGFPMLQNIIQNYHNMKNIDEPFFNIILAKCTVWHDRTILEYIDNSYDAFNIPKTIVAYRILLKSMGSIDDVTTQEILQRWINLICKSDEIGQRFIANADWAALRDATVTWTQRNRGISSSSPMSAVNSLAPSTTNTPSPSLSPIPDRDTLSSARNTPNKIWSGTPVPPPSTEMDFYSHPAFQAANASGAFDDMASATVNPTPRKNFTNGIVPNTPQPIDDRMVLYLKIVKRYSPFCRDSRQLARLTTGTAVKYSVLQEVLNQFQSLNVNDIPVPELRNLKPTCV.

3 disordered regions span residues 1–28 (MFRF…KTNS), 124–148 (PRRS…HPNT), and 566–618 (NRGI…GTPV). A mitochondrion-targeting transit peptide spans 1–79 (MFRFAQPANV…HFKNQFSSRN (79 aa)). Residues 125 to 140 (RRSNMRNNGNNNMNNG) show a composition bias toward low complexity. Residues 566 to 578 (NRGISSSSPMSAV) are compositionally biased toward polar residues. Over residues 579–596 (NSLAPSTTNTPSPSLSPI) the composition is skewed to low complexity. The span at 602-613 (LSSARNTPNKIW) shows a compositional bias: polar residues.

Belongs to the RMD9 family. In terms of assembly, monomer. Phosphorylated. Phosphorylation promotes binding to RNA.

It localises to the mitochondrion inner membrane. May be involved in the processing or stability of mitochondrial mRNAs. The protein is RNA-binding protein RMD9-like, mitochondrial of Candida glabrata (strain ATCC 2001 / BCRC 20586 / JCM 3761 / NBRC 0622 / NRRL Y-65 / CBS 138) (Yeast).